Reading from the N-terminus, the 203-residue chain is Probable proteasome subunit beta type-1 (203 aa).

The propeptide at 1-10 (MMSNEKEMTG) is removed in mature form. T11 functions as the Nucleophile in the catalytic mechanism.

It belongs to the peptidase T1B family. As to quaternary structure, the 26S proteasome consists of a 20S proteasome core and two 19S regulatory subunits. The 20S proteasome core is composed of 28 subunits that are arranged in four stacked rings, resulting in a barrel-shaped structure. The two end rings are each formed by seven alpha subunits, and the two central rings are each formed by seven beta subunits. The catalytic chamber with the active sites is on the inside of the barrel.

It is found in the cytoplasm. It localises to the nucleus. The enzyme catalyses Cleavage of peptide bonds with very broad specificity.. The proteasome degrades poly-ubiquitinated proteins in the cytoplasm and in the nucleus. It is essential for the regulated turnover of proteins and for the removal of misfolded proteins. The proteasome is a multicatalytic proteinase complex that is characterized by its ability to cleave peptides with Arg, Phe, Tyr, Leu, and Glu adjacent to the leaving group at neutral or slightly basic pH. It has an ATP-dependent proteolytic activity. The protein is Probable proteasome subunit beta type-1 (PRE3) of Encephalitozoon cuniculi (strain GB-M1) (Microsporidian parasite).